Consider the following 178-residue polypeptide: Peptidyl-prolyl cis-trans isomerase (178 aa).

A signal peptide spans 1-17 (MKLLFFFLVLAVSAAVA). One can recognise a PPIase cyclophilin-type domain in the interval 26 to 177 (FMDIEIDGES…KIAKITDIGL (152 aa)).

This sequence belongs to the cyclophilin-type PPIase family. PPIase A subfamily.

The enzyme catalyses [protein]-peptidylproline (omega=180) = [protein]-peptidylproline (omega=0). Functionally, PPIases accelerate the folding of proteins. It catalyzes the cis-trans isomerization of proline imidic peptide bonds in oligopeptides. Up-regulates interferon gamma production by bovine T-cells. Stimulates high levels of IFN-gamma production by peripheral blood mononuclear cells and T-cells. The IFN-gamma-inducing effect is blocked by cyclosporin A (CsA). The chain is Peptidyl-prolyl cis-trans isomerase from Neospora caninum (Coccidian parasite).